A 268-amino-acid polypeptide reads, in one-letter code: MNGTANPLLDREEHCLRLGESFEKRPRASFHTIRYDFKPASIDTSCEGELQVGKGDEVTITLPHIPGSTPPMTVFKGNKRPYQKDCVLIINHDTGEYVLEKLSSSIQVKKTRAEGSSKIQARMEQQPARPPQPSQPPPPPPPMPFRAPTKPPAGPKTSPLKDNPSPEPQLDDIKRELRAEVDIIEQMSSSSGSSSSDSESSSGSDDDSSSSAGEDNGPASPPQPSHQQPYNSRPAVANGTSRPQGSSQLMNTLRNDLQLSESGSDSDD.

The interval 106-268 is disordered; sequence IQVKKTRAEG…LSESGSDSDD (163 aa). A compositionally biased stretch (pro residues) spans 128–154; the sequence is ARPPQPSQPPPPPPPMPFRAPTKPPAG. Ser165 carries the phosphoserine modification. Residues 171–181 are compositionally biased toward basic and acidic residues; the sequence is DDIKRELRAEV. The segment at 182-262 is necessary for transactivation activity; the sequence is DIIEQMSSSS…LRNDLQLSES (81 aa). Residues 188-203 are compositionally biased toward low complexity; the sequence is SSSSGSSSSDSESSSG. A compositionally biased stretch (polar residues) spans 238-268; the sequence is NGTSRPQGSSQLMNTLRNDLQLSESGSDSDD.

This sequence belongs to the EAF family. Component of the super elongation complex (SEC), at least composed of EAF1, EAF2, CDK9, MLLT3/AF9, AFF (AFF1 or AFF4), the P-TEFb complex and ELL (ELL, ELL2 or ELL3). Interacts with ELL and ELL2.

The protein localises to the nucleus speckle. It localises to the nucleus. The protein resides in the cajal body. Acts as a transcriptional transactivator of ELL and ELL2 elongation activities. The protein is ELL-associated factor 1 (Eaf1) of Mus musculus (Mouse).